Reading from the N-terminus, the 496-residue chain is Cytochrome P450 71A15 (496 aa).

Residues 3–23 traverse the membrane as a helical segment; it reads IIIISLCLATILAFLLLKPLL. Heme is bound at residue C439.

This sequence belongs to the cytochrome P450 family. It depends on heme as a cofactor.

It is found in the membrane. The chain is Cytochrome P450 71A15 (CYP71A15) from Arabidopsis thaliana (Mouse-ear cress).